Here is a 274-residue protein sequence, read N- to C-terminus: Rhamnulose-1-phosphate aldolase (274 aa).

Glutamate 117 is an active-site residue. 3 residues coordinate Zn(2+): histidine 141, histidine 143, and histidine 212.

This sequence belongs to the aldolase class II family. RhaD subfamily. As to quaternary structure, homotetramer. It depends on Zn(2+) as a cofactor.

The protein localises to the cytoplasm. It catalyses the reaction L-rhamnulose 1-phosphate = (S)-lactaldehyde + dihydroxyacetone phosphate. It participates in carbohydrate degradation; L-rhamnose degradation; glycerone phosphate from L-rhamnose: step 3/3. Functionally, catalyzes the reversible cleavage of L-rhamnulose-1-phosphate to dihydroxyacetone phosphate (DHAP) and L-lactaldehyde. This Yersinia pestis protein is Rhamnulose-1-phosphate aldolase.